The chain runs to 469 residues: Spermatogenesis-associated protein 21 (469 aa).

Disordered stretches follow at residues 1 to 76 and 99 to 157; these read MDNR…AGTQ and HRRA…MGAP. Over residues 49–61 the composition is skewed to basic and acidic residues; it reads EVRDIGERREPDR. Residues 62 to 73 show a composition bias toward low complexity; it reads AQQQPQKPAVAA. The segment covering 105-132 has biased composition (polar residues); the sequence is ARSQTAQKSPRTLTPVPTSAPSLPQTPA. Positions 146 to 157 are enriched in pro residues; sequence APGPEPAPMGAP. The stretch at 198–225 forms a coiled coil; the sequence is EPEEQSLQKLYQNREKSEEQLTLKQEEA. Positions 255-290 constitute an EF-hand domain; it reads VTLAQVEDALMSADVNGDGRVDFKDFLAVMTDTRRF. The Ca(2+) site is built by Asp268, Asn270, Asp272, Arg274, and Asp279. The segment at 424-469 is disordered; sequence YALDQCTPPGLDPDIRSPFFQSGSQGNREHNSDSRKWLSSVPARTH. The segment covering 450–459 has biased composition (basic and acidic residues); the sequence is NREHNSDSRK.

Involved in the differentiation of haploid spermatids. In Homo sapiens (Human), this protein is Spermatogenesis-associated protein 21 (SPATA21).